Consider the following 386-residue polypeptide: Lycopene beta-cyclase (386 aa).

Position 4-34 (aspartate 4–aspartate 34) interacts with NAD(+).

This sequence belongs to the lycopene cyclase family. The cofactor is FAD.

The enzyme catalyses a carotenoid psi-end group = a carotenoid beta-end derivative. It catalyses the reaction all-trans-lycopene = gamma-carotene. The catalysed reaction is gamma-carotene = all-trans-beta-carotene. The protein operates within carotenoid biosynthesis; astaxanthin biosynthesis. Its function is as follows. Catalyzes the double cyclization reaction which converts lycopene to beta-carotene. The chain is Lycopene beta-cyclase from Paracoccus sp. (strain N81106 / MBIC 01143) (Agrobacterium aurantiacum).